A 1627-amino-acid polypeptide reads, in one-letter code: Pappalysin-1 (1627 aa).

The N-terminal stretch at 1 to 22 (MRLWSWVLHLGLLSAALGCGLA) is a signal peptide. Residues 23–81 (ERPRRARRDPRAGRPPRPAAGPATCATRAARGRRASPPPPPPPGGAWEAVRVPRRRQQR) constitute a propeptide that is removed on maturation. The segment at 23–99 (ERPRRARRDP…PSPPSRALYF (77 aa)) is disordered. Positions 42 to 51 (AGPATCATRA) are enriched in low complexity. 17 disulfide bridges follow: Cys144–Cys235, Cys327–Cys622, Cys332–Cys657, Cys414–Cys428, Cys424–Cys440, Cys457–Cys473, Cys474–Cys485, Cys583–Cys600, Cys587–Cys612, Cys710–Cys878, Cys713–Cys881, Cys753–Cys835, Cys775–Cys781, Cys947–Cys975, Cys960–Cys971, Cys983–Cys990, and Cys999–Cys1011. Residues 272 to 583 (METHGAHTAL…FRGISEIQSC (312 aa)) are metalloprotease. N-linked (GlcNAc...) asparagine glycosylation is found at Asn390 and Asn402. Asn429 carries an N-linked (GlcNAc...) asparagine glycan. N-linked (GlcNAc...) asparagine glycosylation is present at Asn480. His562 is a Zn(2+) binding site. The active site involves Glu563. His566 and His572 together coordinate Zn(2+). Residues Asn601, Asn619, and Asn725 are each glycosylated (N-linked (GlcNAc...) asparagine). Positions 733–754 (SPSGHWSPREAEGHPDVEQPCK) are disordered. Positions 739-751 (SPREAEGHPDVEQ) are enriched in basic and acidic residues. The N-linked (GlcNAc...) asparagine glycan is linked to Asn825. Residue Asn1026 is glycosylated (N-linked (GlcNAc...) asparagine). Intrachain disulfides connect Cys1036–Cys1070, Cys1051–Cys1139, Cys1192–Cys1205, Cys1215–Cys1269, Cys1227–Cys1238, Cys1242–Cys1280, Cys1285–Cys1329, Cys1300–Cys1310, Cys1314–Cys1342, Cys1346–Cys1399, Cys1362–Cys1373, Cys1377–Cys1410, Cys1415–Cys1458, Cys1428–Cys1438, Cys1442–Cys1471, Cys1478–Cys1539, Cys1492–Cys1502, Cys1506–Cys1554, and Cys1558–Cys1576. 5 Sushi domains span residues 1213-1282 (TDCP…ACEP), 1283-1344 (VDCS…LCEL), 1345-1412 (MCLA…ACVP), 1413-1473 (VTCD…VCQE), and 1476-1556 (GQCS…HCVK). Asn1222 and Asn1226 each carry an N-linked (GlcNAc...) asparagine glycan. Residue Asn1323 is glycosylated (N-linked (GlcNAc...) asparagine). N-linked (GlcNAc...) asparagine glycosylation is present at Asn1465. An N-linked (GlcNAc...) asparagine glycan is attached at Asn1519.

The protein belongs to the peptidase M43B family. In terms of assembly, homodimer; disulfide-linked. In pregnancy serum, predominantly found as a disulfide-linked 2:2 heterotetramer with the proform of PRG2. The cofactor is Zn(2+). Post-translationally, there appear to be no free sulfhydryl groups. High levels in placenta and pregnancy serum. In placenta, expressed in X cells in septa and anchoring villi, and in syncytiotrophoblasts in the chorionic villi. Lower levels are found in a variety of other tissues including kidney, myometrium, endometrium, ovaries, breast, prostate, bone marrow, colon, fibroblasts and osteoblasts.

It localises to the secreted. The catalysed reaction is Cleavage of the 135-Met-|-Lys-136 bond in insulin-like growth factor binding protein (IGFBP)-4, and the 143-Ser-|-Lys-144 bond in IGFBP-5.. Inhibited by complexation with the proform of PRG2. Metalloproteinase which specifically cleaves IGFBP-4 and IGFBP-5, resulting in release of bound IGF. Cleavage of IGFBP-4 is dramatically enhanced by the presence of IGF, whereas cleavage of IGFBP-5 is slightly inhibited by the presence of IGF. The protein is Pappalysin-1 (PAPPA) of Homo sapiens (Human).